A 232-amino-acid polypeptide reads, in one-letter code: Noggin (232 aa).

An N-terminal signal peptide occupies residues 1 to 27; that stretch reads MERCPSLGVTLYALVVVLGLRAAPAGG. Asn-62 carries N-linked (GlcNAc...) asparagine glycosylation. Residues 77-99 are disordered; it reads GFMATSPPEDRPGGGGGPAGGAE. 4 cysteine pairs are disulfide-bonded: Cys-155–Cys-192, Cys-178–Cys-228, Cys-184–Cys-230, and Cys-207–Cys-215.

The protein belongs to the noggin family. As to quaternary structure, homodimer. Interacts with GDF5; inhibits chondrocyte differentiation. As to expression, expressed in condensing cartilage and immature chondrocytes.

It is found in the secreted. In terms of biological role, essential for cartilage morphogenesis and joint formation. Inhibitor of bone morphogenetic proteins (BMP) signaling which is required for growth and patterning of the neural tube and somite. Inhibits chondrocyte differentiation through its interaction with GDF5 and, probably, GDF6. This chain is Noggin (Nog), found in Mus musculus (Mouse).